Reading from the N-terminus, the 392-residue chain is Iron-sulfur cluster assembly SufBD family protein ML0594 (392 aa).

This sequence belongs to the iron-sulfur cluster assembly SufBD family.

This is Iron-sulfur cluster assembly SufBD family protein ML0594 from Mycobacterium leprae (strain TN).